The primary structure comprises 230 residues: Cutinase 1 (230 aa).

The N-terminal stretch at 1–16 is a signal peptide; it reads MKFFALTTLLAATASA. Positions 17 to 31 are excised as a propeptide; the sequence is LPTSNPAQELEARQL. N-D-glucuronoyl glycine is present on Gly-32. An intrachain disulfide couples Cys-47 to Cys-125. Ser-136 (nucleophile) is an active-site residue. Cys-187 and Cys-194 are oxidised to a cystine. Asp-191 is an active-site residue. His-204 (proton donor/acceptor) is an active-site residue.

It belongs to the cutinase family. Post-translationally, the 2 disulfide bonds play a critical role in holding the catalytic residues in juxta-position; reduction of the disulfide bridges results in the complete inactivation of the enzyme. O-glycosylated; contains one mole each of mannose, arabinose, N-acetylglucosamine, and glucuronic acid.

Its subcellular location is the secreted. It carries out the reaction cutin + H2O = cutin monomers.. With respect to regulation, inhibited by n-undecyl phosphonate (C11Y4). Inhibited by paraoxon. Catalyzes the hydrolysis of complex carboxylic polyesters found in the cell wall of plants. Degrades cutin, a macromolecule that forms the structure of the plant cuticle. Allows pathogenic fungi to penetrate through the cuticular barrier into the host plant during the initial stage of fungal infection. In Fusarium vanettenii (Neocosmospora pisi), this protein is Cutinase 1 (CUT1).